The sequence spans 265 residues: R-spondin-1 (265 aa).

The N-terminal stretch at 1-20 (MRLGLCVVALVLSWTHIAVG) is a signal peptide. FU repeat units lie at residues 34–85 (AEGS…GYFD) and 91–135 (MNKC…GSTA). Disulfide bonds link Cys-40–Cys-47, Cys-44–Cys-53, Cys-56–Cys-75, Cys-79–Cys-94, Cys-97–Cys-105, Cys-102–Cys-111, Cys-114–Cys-125, Cys-129–Cys-142, Cys-148–Cys-190, Cys-159–Cys-166, and Cys-199–Cys-206. N-linked (GlcNAc...) asparagine glycosylation occurs at Asn-137. One can recognise a TSP type-1 domain in the interval 147 to 207 (QCEMSEWSPW…KCTVRRTPCP (61 aa)). C-linked (Man) tryptophan glycosylation is present at Trp-153. Residue Trp-156 is glycosylated (C-linked (Man) tryptophan; by DPY19L3). Disordered regions lie at residues 173–192 (EERTRRVLHAPGGDHTTCSD) and 201–265 (VRRT…TWAQ). The span at 245 to 257 (QQQPQPGTTGPLT) shows a compositional bias: low complexity.

Belongs to the R-spondin family. Interacts with ZNRF3; promoting indirect interaction between ZNRF3 and LGR4 and membrane clearance of ZNRF3. Identified in a complex composed of RNF43, LGR5 and RSPO1. Interacts with the extracellular domain of FZD8 and LRP6. It however does not form a ternary complex with FZD8 and LRP6. Interacts with WNT1. Binds heparin. Interacts with LGR4, LGR5 and LGR6. Interacts (via FU repeats) with KREM1. C-, and N-glycosylated. N-glycosylation at Asn-137, negatively influences its secretion and enhancing effect on Wnt/beta-catenin signaling. C-mannosylation at Trp-156 by DPY19L3 is required for its secretion an regulates the enhancing activity of Wnt signaling. As to expression, expressed in the dorsal part of the neural tube on 10 and 12 dpc, especially in the boundary region between roof plate and neuroepithelium. This expression is enhanced in the rostral part. Also expressed in other tissues such as truncal region neighboring forelimbs and mesenchymal tissues around the nasal cavity.

The protein resides in the secreted. The protein localises to the nucleus. Functionally, activator of the canonical Wnt signaling pathway by acting as a ligand for LGR4-6 receptors. Upon binding to LGR4-6 (LGR4, LGR5 or LGR6), LGR4-6 associate with phosphorylated LRP6 and frizzled receptors that are activated by extracellular Wnt receptors, triggering the canonical Wnt signaling pathway to increase expression of target genes. Also regulates the canonical Wnt/beta-catenin-dependent pathway and non-canonical Wnt signaling by acting as an inhibitor of ZNRF3, an important regulator of the Wnt signaling pathway. Acts as a ligand for frizzled FZD8 and LRP6. May negatively regulate the TGF-beta pathway. Has a essential roles in ovary determination. Regulates Wnt signaling by antagonizing DKK1/KREM1-mediated internalization of LRP6 through an interaction with KREM1. The protein is R-spondin-1 (Rspo1) of Mus musculus (Mouse).